Consider the following 562-residue polypeptide: Arginine--tRNA ligase (562 aa).

A 'HIGH' region motif is present at residues 129–139; it reads ANPTGPLHVGH.

It belongs to the class-I aminoacyl-tRNA synthetase family. As to quaternary structure, monomer.

The protein localises to the cytoplasm. It carries out the reaction tRNA(Arg) + L-arginine + ATP = L-arginyl-tRNA(Arg) + AMP + diphosphate. This is Arginine--tRNA ligase from Xylella fastidiosa (strain M23).